A 261-amino-acid chain; its full sequence is Uridine-cytidine kinase 2-B (261 aa).

29–37 (GGTASGKSS) provides a ligand contact to ATP. Substrate-binding residues include Asp86, Tyr114, His119, Arg168, Arg178, and Gln186. ATP is bound at residue Asp215. Positions 238 to 261 (RQNGFQNGHGTPRQRRTSESSRPH) are disordered.

Belongs to the uridine kinase family. As to quaternary structure, homotetramer.

It catalyses the reaction uridine + ATP = UMP + ADP + H(+). The catalysed reaction is cytidine + ATP = CMP + ADP + H(+). It functions in the pathway pyrimidine metabolism; CTP biosynthesis via salvage pathway; CTP from cytidine: step 1/3. The protein operates within pyrimidine metabolism; UMP biosynthesis via salvage pathway; UMP from uridine: step 1/1. Functionally, phosphorylates uridine and cytidine to uridine monophosphate and cytidine monophosphate. Does not phosphorylate deoxyribonucleosides or purine ribonucleosides. Can use ATP or GTP as a phosphate donor. The chain is Uridine-cytidine kinase 2-B (uck2b) from Danio rerio (Zebrafish).